Here is a 287-residue protein sequence, read N- to C-terminus: Probable aquaporin PIP1-5 (287 aa).

Position 1 is an N-acetylmethionine (Met-1). The tract at residues 1–34 is disordered; the sequence is MEGKEEDVNVGANKFPERQPIGTAAQTESKDYKE. Residues 1–55 lie on the Cytoplasmic side of the membrane; that stretch reads MEGKEEDVNVGANKFPERQPIGTAAQTESKDYKEPPPAPFFEPGELKSWSFYRAG. Residues 56 to 76 form a helical membrane-spanning segment; it reads IAEFIATFLFLYVTVLTVMGV. Residues 77-92 are Extracellular-facing; that stretch reads KRAPNMCASVGIQGIA. A helical membrane pass occupies residues 93-113; sequence WAFGGMIFALVYCTAGISGGH. The Cytoplasmic segment spans residues 114–133; sequence INPAVTFGLFLARKLSLTRA. The NPA 1 motif lies at 115–117; that stretch reads NPA. Residues 134–154 form a helical membrane-spanning segment; sequence LFYIVMQCLGAICGAGVVKGF. At 155–175 the chain is on the extracellular side; that stretch reads QPGLYQTNGGGANVVAHGYTK. The chain crosses the membrane as a helical span at residues 176–196; the sequence is GSGLGAEIVGTFVLVYTVFSA. The Cytoplasmic segment spans residues 197-209; sequence TDAKRSARDSHVP. Residues 210-230 traverse the membrane as a helical segment; the sequence is ILAPLPIGFAVFLVHLATIPI. The Extracellular portion of the chain corresponds to 231–257; that stretch reads TGTGINPARSLGAAIIYNKDHAWDDHW. Residues 236 to 238 carry the NPA 2 motif; it reads NPA. Residues 258 to 278 form a helical membrane-spanning segment; that stretch reads IFWVGPFIGAALAALYHQIVI. The Cytoplasmic portion of the chain corresponds to 279-287; it reads RAIPFKSKT. At Ser-285 the chain carries Phosphoserine.

Belongs to the MIP/aquaporin (TC 1.A.8) family. PIP (TC 1.A.8.11) subfamily. As to expression, predominantly expressed in green siliques. Also expressed above ground, in roots and flower buds.

Its subcellular location is the cell membrane. Functionally, aquaporins facilitate the transport of water and small neutral solutes across cell membranes. The protein is Probable aquaporin PIP1-5 (PIP1-5) of Arabidopsis thaliana (Mouse-ear cress).